The primary structure comprises 249 residues: Sugar fermentation stimulation protein homolog (249 aa).

This sequence belongs to the SfsA family.

The protein is Sugar fermentation stimulation protein homolog of Rhizobium rhizogenes (strain K84 / ATCC BAA-868) (Agrobacterium radiobacter).